The sequence spans 553 residues: CTP synthase (553 aa).

Residues 1–270 are amidoligase domain; the sequence is MTKYVFVTGG…DDLICRELEL (270 aa). Ser-13 is a binding site for CTP. Ser-13 is a UTP binding site. ATP is bound by residues 14–19 and Asp-71; that span reads SLGKGI. Positions 71 and 144 each coordinate Mg(2+). CTP-binding positions include 151–153, 191–196, and Lys-227; these read DIE and KTKPTQ. UTP is bound by residues 191-196 and Lys-227; that span reads KTKPTQ. The 253-residue stretch at 295–547 folds into the Glutamine amidotransferase type-1 domain; the sequence is TIGMVGKYVE…IKAALIHQDA (253 aa). Gly-356 serves as a coordination point for L-glutamine. Cys-383 functions as the Nucleophile; for glutamine hydrolysis in the catalytic mechanism. L-glutamine is bound by residues 384–387, Glu-407, and Arg-473; that span reads LGMQ. Catalysis depends on residues His-520 and Glu-522.

The protein belongs to the CTP synthase family. As to quaternary structure, homotetramer.

The catalysed reaction is UTP + L-glutamine + ATP + H2O = CTP + L-glutamate + ADP + phosphate + 2 H(+). It carries out the reaction L-glutamine + H2O = L-glutamate + NH4(+). It catalyses the reaction UTP + NH4(+) + ATP = CTP + ADP + phosphate + 2 H(+). It participates in pyrimidine metabolism; CTP biosynthesis via de novo pathway; CTP from UDP: step 2/2. Allosterically activated by GTP, when glutamine is the substrate; GTP has no effect on the reaction when ammonia is the substrate. The allosteric effector GTP functions by stabilizing the protein conformation that binds the tetrahedral intermediate(s) formed during glutamine hydrolysis. Inhibited by the product CTP, via allosteric rather than competitive inhibition. Catalyzes the ATP-dependent amination of UTP to CTP with either L-glutamine or ammonia as the source of nitrogen. Regulates intracellular CTP levels through interactions with the four ribonucleotide triphosphates. The sequence is that of CTP synthase from Polynucleobacter asymbioticus (strain DSM 18221 / CIP 109841 / QLW-P1DMWA-1) (Polynucleobacter necessarius subsp. asymbioticus).